A 232-amino-acid polypeptide reads, in one-letter code: MRILVVDNYDSFVFNLVQYLGQLGIEAEVWRNDDHRLSDEAAVAGQFDGVLLSPGPGTPERAGASVSIVHACAAAHTPLLGVCLGHQAIGVAFGATVDRAPELLHGKTSSVFHTNVGVLQGLPDPFTATRYHSLTILPKSLPAVLRVTARTSSGVIMAVQHTGLPIHGVQFHPESILTEGGHRILANWLTCCGWTQDDTLVRRLENEVLTAISPHFPTSTASAGEATGRTSA.

Positions 2–198 constitute a Glutamine amidotransferase type-1 domain; the sequence is RILVVDNYDS…LTCCGWTQDD (197 aa). 55–57 contributes to the L-glutamine binding site; the sequence is GPG. Residue cysteine 83 is the Nucleophile; for GATase activity of the active site. Residues glutamine 87 and 133 to 134 contribute to the L-glutamine site; that span reads SL. Residues histidine 172 and glutamate 174 each act as for GATase activity in the active site.

As to quaternary structure, heterotetramer consisting of two non-identical subunits: a beta subunit (TrpG) and a large alpha subunit (TrpE).

It catalyses the reaction chorismate + L-glutamine = anthranilate + pyruvate + L-glutamate + H(+). It participates in amino-acid biosynthesis; L-tryptophan biosynthesis; L-tryptophan from chorismate: step 1/5. Part of a heterotetrameric complex that catalyzes the two-step biosynthesis of anthranilate, an intermediate in the biosynthesis of L-tryptophan. In the first step, the glutamine-binding beta subunit (TrpG) of anthranilate synthase (AS) provides the glutamine amidotransferase activity which generates ammonia as a substrate that, along with chorismate, is used in the second step, catalyzed by the large alpha subunit of AS (TrpE) to produce anthranilate. In the absence of TrpG, TrpE can synthesize anthranilate directly from chorismate and high concentrations of ammonia. This Mycobacterium tuberculosis (strain CDC 1551 / Oshkosh) protein is Anthranilate synthase component 2 (trpG).